The following is a 348-amino-acid chain: UDP-3-O-acylglucosamine N-acyltransferase (348 aa).

His241 serves as the catalytic Proton acceptor.

This sequence belongs to the transferase hexapeptide repeat family. LpxD subfamily. As to quaternary structure, homotrimer.

It catalyses the reaction a UDP-3-O-[(3R)-3-hydroxyacyl]-alpha-D-glucosamine + a (3R)-hydroxyacyl-[ACP] = a UDP-2-N,3-O-bis[(3R)-3-hydroxyacyl]-alpha-D-glucosamine + holo-[ACP] + H(+). The protein operates within bacterial outer membrane biogenesis; LPS lipid A biosynthesis. Catalyzes the N-acylation of UDP-3-O-acylglucosamine using 3-hydroxyacyl-ACP as the acyl donor. Is involved in the biosynthesis of lipid A, a phosphorylated glycolipid that anchors the lipopolysaccharide to the outer membrane of the cell. The sequence is that of UDP-3-O-acylglucosamine N-acyltransferase from Neisseria meningitidis serogroup C / serotype 2a (strain ATCC 700532 / DSM 15464 / FAM18).